The following is a 423-amino-acid chain: 3-isopropylmalate dehydratase large subunit 1 (423 aa).

[4Fe-4S] cluster is bound by residues cysteine 302, cysteine 362, and cysteine 365.

This sequence belongs to the aconitase/IPM isomerase family. LeuC type 2 subfamily. Heterodimer of LeuC and LeuD. Requires [4Fe-4S] cluster as cofactor.

The catalysed reaction is (2R,3S)-3-isopropylmalate = (2S)-2-isopropylmalate. Its pathway is amino-acid biosynthesis; L-leucine biosynthesis; L-leucine from 3-methyl-2-oxobutanoate: step 2/4. Functionally, catalyzes the isomerization between 2-isopropylmalate and 3-isopropylmalate, via the formation of 2-isopropylmaleate. The sequence is that of 3-isopropylmalate dehydratase large subunit 1 from Pyrococcus abyssi (strain GE5 / Orsay).